A 396-amino-acid polypeptide reads, in one-letter code: MRGPAMRLPPRIALSALARGPSCILGSGAATRKDWQTRNRRGFSDFNIEPLPDSDLEESSPWTSRNRSEPTRHIACKKAARNLVRDLLEHQNPSRQIILECNPGPGILTGALLKAGARVVAFESEKTFIPHLEPLQRNMDGELQVVHCDFFKMDPRYQEVVRPDVSSQAIFQNLGIKAVPWSAGVPIKVFGILPYKHERRILWKILFDLYSCESIYRYGRVELNMFVSEKEFRKLIATPKRPDLYQVMAVLWQVACDVKFLHMEPWSSFSVHTENGHLEKSKHGESVNLLKQNLYLVRMTPRRTLFTENLSPLNYDIFFHLVKHCFGKRNAPIIRHLRSLSTVDPINILRQIRKNPGDTAARMYPHDFKKLFETIEQSEDSVFKWIYDYCPEDMEF.

The N-terminal 43 residues, 1 to 43 (MRGPAMRLPPRIALSALARGPSCILGSGAATRKDWQTRNRRGF), are a transit peptide targeting the mitochondrion. Residues 43-71 (FSDFNIEPLPDSDLEESSPWTSRNRSEPT) are disordered. Ile-74, Glu-123, and Asp-149 together coordinate S-adenosyl-L-methionine. The DNA-binding stretch occupies residues 328 to 329 (KR).

This sequence belongs to the class I-like SAM-binding methyltransferase superfamily. rRNA adenine N(6)-methyltransferase family. KsgA subfamily. Homodimer. Component of the mitochondrial transcription initiation complex, composed at least of TFB2M, TFAM and POLRMT. In this complex TFAM recruits POLRMT to the promoter whereas TFB2M induces structural changes in POLRMT to enable promoter opening and trapping of the DNA non-template strand. Interacts with mitochondrial RNA polymerase POLRMT. Interacts with TFAM. In terms of tissue distribution, ubiquitously expressed.

The protein localises to the mitochondrion. The enzyme catalyses adenosine in rRNA + S-adenosyl-L-methionine = N(6)-methyladenosine in rRNA + S-adenosyl-L-homocysteine + H(+). S-adenosyl-L-methionine-dependent rRNA methyltransferase which may methylate two specific adjacent adenosines in the loop of a conserved hairpin near the 3'-end of 12S mitochondrial rRNA. Component of the mitochondrial transcription initiation complex, composed at least of TFB2M, TFAM and POLRMT that is required for basal transcription of mitochondrial DNA. In this complex, TFAM recruits POLRMT to a specific promoter whereas TFB2M induces structural changes in POLRMT to enable promoter opening and trapping of the DNA non-template strand. Stimulates transcription independently of the methyltransferase activity. The sequence is that of Dimethyladenosine transferase 2, mitochondrial from Mus musculus (Mouse).